A 6919-amino-acid polypeptide reads, in one-letter code: MEQSTFATAGSPNRTVTNNEVVEKDIREICAEVLRRPVGKIKLDKSFIAQGGDSLLAIKLMARCGEAGYTITINDMLQATSIRELCQSVKLAEGSSAPGKLSSGPVLDGPAQPAEIRTKPLTEAQKLYASTKAWDAKVFKLEGGIAESTLYAALKLLVSHHPILRANFTTLENNDLGLTYNDTIDAFAHRRIEIPTISTQAEQGYLTVGWEADGKREDGLFAATVFVQKDRDHGTCLARYLRLDFHRAIIDVSSWDILQRDLDHAVLGKPLARGYPETSFDSWASTHNLSDFTFRRSTPVESTNDERNTNERQHNRHQNDGKIELADVVILETDAAGLAKLEDESIHSVLRTQPEDFIVAALHIALKGVTRSEETLSFGIISNGRHSGGPKLSATVGCFDNIIRRSVERAEEDGGLGFLRKVKDTRMGFFNVSRISGVEDRSRYVLLHMGQLGRTTAPIADTLHELFHQDDFSILPHGCLAFVEPFLEQQQLKLRLRSRSAELGREKLGQLAGLFRAALKELIAECEMSEVQGTLSDFPFLKLTYSELDNLVSSRLKAVTGDPFRDVEAVFPCGPRQEAFLVAQAVYPDLYQCSFVIKLSSEDLNVELDCGRLRDAWVRLVARHPALRTVFIESPNRQGHFDQVVMKQGISSITFLENEGEEAARRLACRRPVTFKSYGQTHQVTFCRISPSSVYLRLDMSHAVVDGLSALVLMRDLFQLYSKQKLASRVMAYQDFVNYQSRLPMQESMTYWSNYLAGAQPSHFPLYGDQLSREDLRTVRSNIQLGSDVLGEFCAWALVLRSYTGLEDVCFSYATSGRDVPLKGINNTVGAFLNAVVCRIKLPPTATVPQALVKARNDFVESLSHQYYLALDDAQSGDFARFKSNTLMSCQRKAATELAGSGLAFELVDAANPNEYDMSINIQVGHEGLEVMIDYWNSRIGQRTVESVAQSFRQALLNIVKEEDAVLGEIDISTTQEINQLREWAKEIPPKADYRIHDKVYEQRLRRPDAWAVQGWDGDLTYQQLDDTANQLASYLIRLGVQPETKIPICFEKSKWAVISQLAILKAGGCVVPLGTTQPASRTRLILKDLQATIILTSGKFASRFMDLVTHTVVIDEAFMAELPPSEMVPCLATVDNAAFIIYTSGSTGVPKGVVLPHASLCTSLEHMGARFKLSPDTRTVQFSAYTFDISIQDIYTTWHYGGCLIILSEEDRISNLAPEMVKYQVNCAGLTSTVAGTIFPQDVPTLKKLVLLGEAVKQAVVDQWIGHVEVYNAYGPSECSMQASINRLTPGCNALNIGWAFAGALWVVDPNDYNRLVPIGAPGELLIEGPLQARGYLNSPEKTAAAFVVDAAWMIKNGFGSGRRLYRTGDLVQQNPDGSITYIGRRDTQIKVRGQRVEVGEIEHHLLQQDAVLDAAIIYPKQGPCKDRLVGLLTLRDFFCGKRPGQDIIPIPSGKLSHTKSQLAAASEELSNHVPEHMVPKIWIPLESMMPQNDSSKLDRKKLGVWLEAIDTAFLEALTKSSDAGSESREPETLLERQVQQAWADVLRLPPTQIPIEHKSFLSVGGDSITAMHVVSWLRVRGITVAVRDVLESKSVAQLAQTAEVKDEKTEGHQSLLSPMQKWYFESIADPELPLKSSGAHRYNSNICLVPRKLFEYSELAQAVGALVDRHPILRSRFQRHNVAGWQQSLHSDGDQPFALRHYTVSTSEEAEALIVEAQGSLDLEQGPVFFVEYIQVEDARNTDLLFMTAHRLVVDEVSWDIIRRDISVLLEGQQFPTSNPLSFQTWIKLQAQRSQNLEGIVFRSDLPPADFKYWGLNDGNTYEDETVEEVIFNSHDTNAYFRDANRALRTERVEILLAALLKSFQKTFPNRRLPAVFEINDGRNVGDSGLDFSNTVGNFECMTPIHIFLDEPHNGLDIVRQTKDARRSAFGRVLSDGQQAFTDRWVEVLFQYSEGLASETIFETVDLTGPGTSPVGKSTRRGCVFNVNVIAYPDKLRIRFKFNRNMKYQEKIRDWADSYANAISALGTELSGASPTLTVTDFPLLHLTSESLRVLQDEILPDAGLNCSDVEDIYPCSPIQQGILISQVKSPSEYYIQQSFEIIPTTSSGKLDHTRLLAAWQVLINRHPMLRTRFVRSASGSSERLFDQVVLKSCKAEAEHVECTDDDLFRNLAVKATLDERHIDKRIGHKLTIYSTSSNRTFGNIIISHALVDASSLMIIQAELAQAYDGKLAPDTIGAAYSEYISHLQKIPADQALDYWAKRLADAEPCYLRGMTEDGMQPATADDSTPRRPMQTVSIDINCIEKLHSFTETYGVTIANVFQLVWAMVLAQYTGSPNVSFGYLSSGRDVPVKDVETMVGPLINMMVTHIKLDMEASAQNTLKQIQENFFESFNYQRAPLVEIWHALQLQGRSLFNTALSYRHIVSAEKHQLSLALEQITGEDPTEYDVTVSVFASPEKISASLQYSPDFLSYDSANRLLGCVRQGIQSLVTNGDTHVGQLNTVTPKDILQVRAWNDKIPAVDGYCLIHDLFNEQRLLRPNATAVCAWDGDLTYQQLDEMSNALAHHLVTLGIGPEVMVALCLDKSKFAIIAQLSVLKAAGVVVSINPKHPTQRLELVLKDINAKVMLTSHQYSSQFRNLVPHILHMDETLFSALSSQPQPPSTNVTPNNAAFIIYTSGSTGMPKGVILTHLSLCSSFRAHGKIYEMSPSTRSLQFAAYTFDASISDIWGTMSHGGCVCVISEEERMNNLQGVIEAYGATHAQVTPTVASLLDIANIKCLTTLILGGEAVREAMIEEHAKAAGRVKVLNGYGPSECSIYTTCSAALVQKKQALNIGRPLVGSVWVIANGESICPIGAVGELWVEGPLLARGYHNDPKKTKAAFVTNPKWAKAIRLEGHRFYNTGDLVRQSPNGDLIYQARKDSQVKVRGQRVEIGEIEYRVKKLLPAVKSLVASLITPGGNSPNIMISVAMELSDDFLQRHLLSAPFHEIFLPNAPHLRDAFSQLHASLLEVLPSYMVPRLFVPVVHLPQTTSSKLDRRTIKQMLENLPGDVLFQYSLSTSLSVAPSTFMEKKLQSLWATVLNVDQDHVGVQDHFLHCGGDSFTAMRLVSLANAKDIPISVADVFRYPKLQEMAAHLEAQMGRRRDVQDIPRFGLWKEAQQTEASVSERELLRVAKLCDVAVHDIEDVYPCTPLQEGLMAITTQQPGSYIGRWVFRIQEAVDTNAFKRAWSSLTQKAPILRTRIAPSQSGGLQVVVRESVAWGGDLNLKQYLDKDLQQSFGYGQPLVRQALIYSGNKRYFVLTAHHSVYDGYSLRKLFDAVALLYDGKELAPTPAFSRFISYIGQQDLKAAKSFWQSQIKRKVGAPFPSLHKLSYRPQPTQKLSSSVEIRPVGGPNTLASSLRAAWALAISAYGGNDVLFGVALSGRSAPVPGILDMAAPTITTVPVHVHINPEQTINQYLTMVHKQSVDMIPFEHTGLQNIRRFVGQIDLPHLFAVQPAQERESSVHGKLLAYEHGHVPELNLDGYALTVECVTSDISDIPVTIEAHFDERMISASQTNDLLSRFSHIVTQLVTNGRDQTQLKYLDLLSKDEARRLFQFNQGIPPVKQALVHELVSQHVSTNPYAPAVCAWDGDLTREELDRLANKLALYLTTLGVIPETMVALCFEKSKWALVANLAVLKAGGAVVPIRADPIQRVQNILQQTGITTILASEGFASALEGLVPNVITIGDDLIQSLPSPVTQPISTVTPSNAAFVIFTSGSTGNPKGVVVEHGAMSTSMQAHGKKFGMNSETRAFNFAHFTFDISLHDIISTLQFGGCVCMPSERERVNNMADAMNRMGVNYSFLPPRVIHTIKPSDVPGLKTLVVGGEAVQPEYLEPWLNGVRVFNAYGPAECSIAATCNEVANKADVPNIGRAIAGGLWVVDENNYNRLLPLGAVGELLIEGPLLARGYLNDPIKTANAFICNPAWISRYSEHDHCSQRRERRMYRTGDLVRQMEDGSLIYVGRRDGQVKIRGQRVEIGEIEHHVTEHPSVVENVIVYPHCGPAQLQLVGILTLHGFISSDADEGIQTTPLDQLPHALQQASSVRDHLHSCIPEYMVPNSWISLAAMPHNSSDKIDRRRLTQWLETMEVEHFKILTQSYTEGTTTPSTSEEKNIQAVWADVLHASIGKVPMSRPFLAVGGDSVTAMQVVSKCRSQYSIYVTVRDVLQCESISQLAKKAVIKTTSPNTDTQLSTSSIDQAPAATSAPTAFDINASDLSKLETDVLPRTGVENLSAIESIYYCSPIQQGILMSQIKDHTTYQVRQAGEIRAADSSPVDMNRLLRAWQLVVQRHAILRTFFVPSPSGRELFYQVVLKRYTPTIPVLQSCSSDDFLAQFEGLERPEYAPGQPPYQLTLAQASTGQVYAQVDVNHVLMDASSMDLILNDLILAYDNMLPDSPAPSYGIYVSFLQQTFAFDSLNYWTNHLAGAEPSCLPASSNLDSGKRSLRTVSLEVDNIKPLQDFRDTHGVTIANITQLAWATVLSRYLGSRDVSFGYISNGRDAPIDGIHEMCGPMINLMVSRVQLAHPGTTVAEAAKQVQHNFLDAFNHQRTSLSDIQHALHLSERGLFNTTMIYKPKPMMDTHEKRSLVIESLAGEDPTEYDVQVKIVSDDKSLSLDLEYATTFIDEPSARRLLGSFGRALSSIAANPDANIDEIDVIPTGDVEVLHIWNSTVGETVPGSIHDKIHEQALSQPGAQAVCGWDGELTYAELTGMSDRLAHHLRNLGVREEVMVGLCFDKSMWTIVSMIAVLKSGGVIVPLGVQMPVQRLQHILNEITAPVVLTMDKHASKLRDITSANVLTIDGGFIATLPNPCHPPSESSLTSESAAVVIYTSGSTGTPKGVVLTHGTICTSIESHGPKLQMGPNTRALQYSAYVFDLSLLDILSTLRFGGCVCVVSEEDRVDTNSLTTKMEAMAVNFAVLTPTVASLIDPRTVPTLSTLVLAGEVVPHSAVETWASHVTLFNGYGPAESTILATTNGPIIEKEQASSVGTALAGAIWVVDTQDHNRLVPLGVVGELLISGPLVARGYLNDTERTSQSFITDPAFVSKYGFHSWAGKRIYKTGDLVRQDPTDGSIMFVGRADGQIKIRGQRVEVGEIEYWLRQHFDTQTVAVDVIGASTGDVALVAAIELRKDRSSNECVFLDVNHQLRESFLQLQAALLKALPSYMVPSKYIPIKNMPNTASGKLDRRALRTLIGGLKEEQLAQYSLADGGNVALSTETERRLARVWVAALNTSKEFGANAHFFRVGGDSVTAMRLVALARTAQPPILLSVSDVFKHPVLSDMANTIANSESTENCQYDNDVPPFLLLPYPQHERQARLQEIASQCKVEVDVIEDAYPCTPLQQGLMAITAQHPQAYISRWVFRLEDTIDESRFCQAWRTLVELNPILRTRIIQDPKAGGMQVVLQQQITWNNVLSELPSYIAEDSAKPMGFGDPLVRLAVVTSRQARFFVWTAHHSTYDGWTARKLMEAAFALYSNNPAPSFHPFTRFVQYLQSNSAEETRDYWKSQLEGGIGPSFPGSPKNGSPRKLRIQSCRIPANNSNDFTLSTLLRATWALILSQETGSQIVGFPTALSGRTAPVDGILDVLGPTITTVPIRVSVDPAQSLSAYLASIQQQATEMLPFEHAGLHNISRMTSLPLNFQHLFVVQPAVDRLDQANSGFQGLTPVPFETYGFHNYPLVIECSTNMTDTDSAVDLQLQFDPAVLSVEKATTILERFTHVFGQLQSAANEATCEVLVSDVIFMTPEDLGRIQKWNHFDERMTMADGCIHDLVHHQLLSCPDAQAVHAFDGHLTYRELHRLATRLAYHLEGLGVGPQVPVATIFEKTKWVVVTYLAVLKAGGTIVPVNHQHPKQRMQALVQSIGTRVILTSQDPGRLQGLVTGPVLKVDQDFFTQLPDSDNPHPVVQATDSAFIIFTSGSTGTSKAVVLQHGAIVSSMVQGHGSLYASPDTRAIQFSALNFDISIAEIFTTLSFGGCVCVISEDDRVSRLAEAMEEAAVNFAILTPTVASLLKPEQVPSLRRLLLVGEALRPEVAEPWSSSHVELHNAYGPAESSILTTFSQRIRDPVQAPNIGFPLAHSNLFVVDPSNYHNLLPVGMVGELLIEGPLLAREYLGDAKKTAEAFVTDPAWLQQYDLGPVSGRRFYRTGDLVQQKLDGSFIYIGRRDTQVKIHGQRVEIGEIEFWVKNKLPDVREVVAGLFKPIYEEDEPLLAVAMEVPSSSVESSGLLSLSDELREAFGELRRNLLTVVPSYMVPQLYLPFAKLPLTDSGKLNRRATWEMIHSCGSWSQYFLVDDIKAEPATVTERLLQSLWATVLKVPASSIGAKDDFFRSGGDSISAMRLVASAREDAHISLKVADVFRHPILSDMATLIDRKTTVTKPAYCPFSTMTDDYAIRDSIKPLLSVPSEIIDVAPTTDLQSLSIATSLRPSRDLMAYVSIDGIGSPNFARWRASCLEVVKKHDILRTAYVVYKNQLLQVVLRDYAPAVTHYQTDQSIEEFTKEFIAHDMHRPPQLGYPFLEFAIICSPVANRHRVLFRLSHAEYDAISLSYFVNSLREIYQRQSTTEYVGFPQYISSLANQDTWSSREYWRSLLKGCTMPAISSSSQPRRLPSRQVYHDSRRVSFKTLPAGITLSTIVRSAWALTLGQHVGNPDVLFGEVVSGRNGDPIAERAAGCCANLVPVRATIHPAWTTHDLLRSVQQQLVSRLPHESLGFRDLMRNCTDMPVGTVFTSLLNHLDQASEWTLDLDDGKYNVSVAKTEGAGDVSDVSVTSTASTDYVEIAMAYLEDGVTVEVAEKLLSQLCETVDAFMNGALDAELPTVDCVSELNAQGVNEAPKFEGDLVDASLVAFELQKRGHEVTVDEVVDRGLSLSGV.

A Carrier 1 domain is found at 17–93 (TNNEVVEKDI…ELCQSVKLAE (77 aa)). Ser54 carries the post-translational modification O-(pantetheine 4'-phosphoryl)serine. The interval 123-427 (EAQKLYASTK…FLRKVKDTRM (305 aa)) is epimerization 1. The interval 294–319 (FRRSTPVESTNDERNTNERQHNRHQN) is disordered. The span at 304–319 (NDERNTNERQHNRHQN) shows a compositional bias: basic and acidic residues. The segment at 604 to 981 (LNVELDCGRL…ISTTQEINQL (378 aa)) is condensation 1. The interval 1003–1394 (QRLRRPDAWA…GRRDTQIKVR (392 aa)) is adenylation 1. Residues 1531–1608 (EPETLLERQV…QLAQTAEVKD (78 aa)) form the Carrier 2 domain. Ser1569 carries the O-(pantetheine 4'-phosphoryl)serine modification. Positions 1617–2031 (LLSPMQKWYF…ANAISALGTE (415 aa)) are epimerization 2. Positions 2072-2509 (VEDIYPCSPI…VGQLNTVTPK (438 aa)) are condensation 2. The segment at 2541-2930 (RPNATAVCAW…ARKDSQVKVR (390 aa)) is adenylation 2. A Carrier 3 domain is found at 3067 to 3143 (APSTFMEKKL…EMAAHLEAQM (77 aa)). Ser3104 carries the post-translational modification O-(pantetheine 4'-phosphoryl)serine. Residues 3188–3599 (EDVYPCTPLQ…LLSKDEARRL (412 aa)) form a condensation 3 region. Residues 3620-4018 (QHVSTNPYAP…GRRDGQVKIR (399 aa)) form an adenylation 3 region. In terms of domain architecture, Carrier 4 spans 4151–4228 (TPSTSEEKNI…QLAKKAVIKT (78 aa)). Ser4188 bears the O-(pantetheine 4'-phosphoryl)serine mark. A condensation 4 region spans residues 4282–4708 (ESIYYCSPIQ…EIDVIPTGDV (427 aa)). The interval 4732-5133 (EQALSQPGAQ…GRADGQIKIR (402 aa)) is adenylation 4. The 78-residue stretch at 5260–5337 (ALSTETERRL…DMANTIANSE (78 aa)) folds into the Carrier 5 domain. O-(pantetheine 4'-phosphoryl)serine is present on Ser5296. The tract at residues 5380–5775 (EDAYPCTPLQ…VFGQLQSAAN (396 aa)) is condensation 5. The segment at 5824–6216 (SCPDAQAVHA…IGRRDTQVKI (393 aa)) is adenylation 5. The Carrier 6 domain occupies 6344–6421 (EPATVTERLL…DMATLIDRKT (78 aa)). Ser6381 carries the O-(pantetheine 4'-phosphoryl)serine modification.

The protein operates within antibiotic biosynthesis. Functionally, nonribosomal peptide synthetase; part of the gene cluster that mediates the biosynthesis of emericellamides, secondary metabolites acting as antibiotics. The biosynthesis of emericellamides initiates from the highly reducing polyketide synthase easB which catalyzes the formation of the linear polyketide chain. EasB produces several polyketides that can be further processed by the downstream enzymes. The polyketides are released from easB as linear polyketide carboxylic acids, which are converted to CoA thioesters by the acyl-CoA ligase easD. The substrates are then loaded onto the acyltransferase easC, which shuttles them to the first thiolation (T) domain of the nonribosomal peptide synthetase easA. EasA then performs condensation of the polyketides with one glycine, two alanine, one valine and one leucine residues. A last step of cyclization leads to the production of emericellamides. The chain is Nonribosomal peptide synthetase easA from Emericella nidulans (strain FGSC A4 / ATCC 38163 / CBS 112.46 / NRRL 194 / M139) (Aspergillus nidulans).